The following is a 412-amino-acid chain: Major facilitator superfamily domain-containing protein 3 (412 aa).

Helical transmembrane passes span 10–30 (GLYL…PILL), 40–60 (VGLT…APLV), 68–88 (VWLT…AVLP), 99–119 (TTVM…DVAL), 152–172 (GGLL…LLAA), 173–193 (TYWL…LPWP), 204–224 (YLLQ…FVLT), 252–272 (LWSG…GGAL), 291–311 (LGSL…GASV), 320–340 (AVLL…TATF), 361–381 (FLAT…GVLA), and 384–404 (LGPH…VLDL).

The protein belongs to the major facilitator superfamily. In terms of tissue distribution, in brain, expressed in the cortex, striatum, hippocampus, hypothalamus, thalamus and cerebellum (at protein level). Widely expressed with highest levels in kidney and liver.

The protein resides in the membrane. This Mus musculus (Mouse) protein is Major facilitator superfamily domain-containing protein 3 (Mfsd3).